Consider the following 255-residue polypeptide: Hydroxyacylglutathione hydrolase (255 aa).

7 residues coordinate Zn(2+): His55, His57, Asp59, His60, His113, Asp132, and His170.

Belongs to the metallo-beta-lactamase superfamily. Glyoxalase II family. Monomer. Zn(2+) is required as a cofactor.

The catalysed reaction is an S-(2-hydroxyacyl)glutathione + H2O = a 2-hydroxy carboxylate + glutathione + H(+). The protein operates within secondary metabolite metabolism; methylglyoxal degradation; (R)-lactate from methylglyoxal: step 2/2. In terms of biological role, thiolesterase that catalyzes the hydrolysis of S-D-lactoyl-glutathione to form glutathione and D-lactic acid. The sequence is that of Hydroxyacylglutathione hydrolase from Methylobacterium nodulans (strain LMG 21967 / CNCM I-2342 / ORS 2060).